A 92-amino-acid chain; its full sequence is Small ribosomal subunit protein uS19 (92 aa).

Belongs to the universal ribosomal protein uS19 family.

Protein S19 forms a complex with S13 that binds strongly to the 16S ribosomal RNA. In Pectobacterium atrosepticum (strain SCRI 1043 / ATCC BAA-672) (Erwinia carotovora subsp. atroseptica), this protein is Small ribosomal subunit protein uS19.